A 428-amino-acid polypeptide reads, in one-letter code: ASTRA-associated protein 1 (428 aa).

WD repeat units lie at residues 15–52 (GHTHPVTSLRFYNAFLVSGDESGWVFWWSLVTRRPLAI), 55–93 (AHHEAILSLVWMDETHLLTQGRDDKLYVWRLELDAQGKS), 122–163 (VNSL…VVWN), 171–209 (GIKTGIVMDLNIMNKKLIVGYEGGAVAVFDISDRNRYTP), 217–259 (SHVQ…EEME), 323–362 (VRHSGLSSLQLDSDGDLIMTAGWDGKVRLFTYDDISKVSV), and 364–418 (HERE…EKTL). Positions 250–295 (DQVVPEEEMEEPEPAKNSERPPSPKIVEVEDSPELEPPKNVVRGFD) are disordered.

Belongs to the WD repeat ASA1 family. In terms of assembly, component of the ASTRA chromatin remodeling machinery complex.

The protein localises to the nucleus. In terms of biological role, component of the ASTRA complex involved in chromatin remodeling. This is ASTRA-associated protein 1 (ASA1) from Yarrowia lipolytica (strain CLIB 122 / E 150) (Yeast).